Consider the following 561-residue polypeptide: Potassium-transporting ATPase potassium-binding subunit (561 aa).

The next 10 membrane-spanning stretches (helical) occupy residues isoleucine 4 to isoleucine 24, alanine 65 to leucine 85, isoleucine 133 to valine 153, leucine 177 to valine 197, phenylalanine 253 to phenylalanine 273, alanine 285 to glutamate 305, glycine 380 to glycine 400, methionine 417 to valine 437, methionine 484 to leucine 504, and phenylalanine 528 to leucine 548.

This sequence belongs to the KdpA family. In terms of assembly, the system is composed of three essential subunits: KdpA, KdpB and KdpC.

It localises to the cell membrane. In terms of biological role, part of the high-affinity ATP-driven potassium transport (or Kdp) system, which catalyzes the hydrolysis of ATP coupled with the electrogenic transport of potassium into the cytoplasm. This subunit binds the extracellular potassium ions and delivers the ions to the membrane domain of KdpB through an intramembrane tunnel. This Listeria monocytogenes serotype 4b (strain CLIP80459) protein is Potassium-transporting ATPase potassium-binding subunit.